A 370-amino-acid polypeptide reads, in one-letter code: DNA replication and repair protein RecF (370 aa).

ATP is bound at residue 30–37; that stretch reads GENAQGKT.

It belongs to the RecF family.

It is found in the cytoplasm. In terms of biological role, the RecF protein is involved in DNA metabolism; it is required for DNA replication and normal SOS inducibility. RecF binds preferentially to single-stranded, linear DNA. It also seems to bind ATP. The polypeptide is DNA replication and repair protein RecF (Staphylococcus aureus (strain bovine RF122 / ET3-1)).